The primary structure comprises 81 residues: Cell division protein ZapB (81 aa).

The stretch at 6-80 forms a coiled coil; sequence EVFEKLEAKV…LQALLGRMEE (75 aa). The span at 38-47 shows a compositional bias: polar residues; the sequence is SLAQDVQSAQ. The tract at residues 38-67 is disordered; it reads SLAQDVQSAQHQREELERENNHLKEQQSGW. Positions 48–62 are enriched in basic and acidic residues; it reads HQREELERENNHLKE.

This sequence belongs to the ZapB family. As to quaternary structure, homodimer. The ends of the coiled-coil dimer bind to each other, forming polymers. Interacts with FtsZ.

Its subcellular location is the cytoplasm. In terms of biological role, non-essential, abundant cell division factor that is required for proper Z-ring formation. It is recruited early to the divisome by direct interaction with FtsZ, stimulating Z-ring assembly and thereby promoting cell division earlier in the cell cycle. Its recruitment to the Z-ring requires functional FtsA or ZipA. This chain is Cell division protein ZapB, found in Citrobacter koseri (strain ATCC BAA-895 / CDC 4225-83 / SGSC4696).